A 363-amino-acid polypeptide reads, in one-letter code: G-protein coupled receptor 6 (363 aa).

At 1–75 (MNASAAALNE…SGLLLSAVNP (75 aa)) the chain is on the extracellular side. Asn-2 and Asn-9 each carry an N-linked (GlcNAc...) asparagine glycan. Residues 28–51 (AGTPDTSEWGPPAASAALGGGGGP) form a disordered region. An N-linked (GlcNAc...) asparagine glycan is attached at Asn-52. Residues 76 to 95 (WDVLLCVSGTVIAGENALVV) form a helical membrane-spanning segment. Residues 96–107 (ALIASTPALRTP) are Cytoplasmic-facing. Residues 108-131 (MFVLVGSLATADLLAGCGLILHFV) traverse the membrane as a helical segment. Residues 132 to 143 (FQYVVPSETVSL) lie on the Extracellular side of the membrane. The helical transmembrane segment at 144-165 (LMVGFLVASFAASVSSLLAITV) threads the bilayer. Residues 166-186 (DRYLSLYNALTYYSRRTLLGV) lie on the Cytoplasmic side of the membrane. The chain crosses the membrane as a helical span at residues 187 to 206 (HLLLAATWTVSLGLGLLPVL). Topologically, residues 207 to 231 (GWNCLADRASCSVVRPLTRSHVALL) are extracellular. Residues 232–250 (STSFFVVFGIMLHLYVRIC) traverse the membrane as a helical segment. At 251–278 (QVVWRHAHQIALQQHCLAPPHLAATRKG) the chain is on the cytoplasmic side. A helical membrane pass occupies residues 279-305 (VGTLAVVLGTFGASWLPFAIYCVVGSQ). At 306 to 310 (EDPAI) the chain is on the extracellular side. The helical transmembrane segment at 311-332 (YTYATLLPATYNSMINPIIYAF) threads the bilayer. At 333–363 (RNQEIQRALWLLFCGCFQSKVPFRSRSPSEV) the chain is on the cytoplasmic side. Cys-346 is lipidated: S-palmitoyl cysteine. Ser-357, Ser-359, and Ser-361 each carry phosphoserine.

This sequence belongs to the G-protein coupled receptor 1 family. Expressed in the brain, with a prominent distribution in striatum.

It localises to the cell membrane. Orphan receptor with constitutive G(s) signaling activity that activate cyclic AMP. Promotes neurite outgrowth and blocks myelin inhibition in neurons. The sequence is that of G-protein coupled receptor 6 (Gpr6) from Rattus norvegicus (Rat).